The chain runs to 90 residues: Putative large ribosomal subunit protein uL23c (90 aa).

The tract at residues 1–46 (MDGIKYAVFTDKSIQLLGKKQYTSNVESRSTRTEIKHWVELWNSYE) is coded by first part of gene. Positions 47–90 (MNSHRLPGKGRRMGPIMGHTMHYRRMIITLQSSYSIPPLRKKRT) are coded by second part of gene.

Belongs to the universal ribosomal protein uL23 family. Part of the 50S ribosomal subunit.

Its subcellular location is the plastid. It localises to the chloroplast. In terms of biological role, binds to 23S rRNA. This Spinacia oleracea (Spinach) protein is Putative large ribosomal subunit protein uL23c (rpl23).